Here is a 581-residue protein sequence, read N- to C-terminus: MKSHIQSLLEQTLESFKQQGIVPADFEARIQVDRTKDKSHGDLATNLAMMLTKVAGKNPRELAQLIIDTLPASAYVAKVEIAGPGFINFFINDSALADQLQNAVNDEHLGIKLPTPQTVVVDYSSPNLAKEMHVGHLRSTIIGDSVVRALEFLGHKVIRQNHVGDWGTQFGMLLAYMEELRAKNGEKAQLELSDLENFYRAAKLRFDESAEFATRARQLVVELQSGDEYCNKLWREFNDISLSHCHEVYARLGVSLTRADVHGESAYNADLEQVVKDLDAQGLLTESNGAKVVFQEAFRNKEGEPLPVIIQKADGGYLYATSDLAAMRYRSNVLKADRVLYFVDLRQALHFQQVFSLAKLAKFVREDMSLEHLGFGTMNGEDGRPFKTRSGGVVKLVDLLEEANVRALELVRSKNPDMDEATLTEIARVVGISAVKYADLSKNRTSDYIFSFEQMLSFEGNTAPYLLYAYTRVAGIFKRVTDLDLSQAKIVLEHEKEKDLGNKLAQFGEILSRVVDKGQPHVLCAYLYELAGAFSSFYEACPVLAADNDAQKNSRLLLAQLTARTLQKGLNLLGIETLERM.

The 'HIGH' region signature appears at 126–136 (PNLAKEMHVGH).

The protein belongs to the class-I aminoacyl-tRNA synthetase family. Monomer.

The protein localises to the cytoplasm. The catalysed reaction is tRNA(Arg) + L-arginine + ATP = L-arginyl-tRNA(Arg) + AMP + diphosphate. In Shewanella baltica (strain OS155 / ATCC BAA-1091), this protein is Arginine--tRNA ligase.